The primary structure comprises 34 residues: Dermaseptin-H5 (34 aa).

As to expression, expressed by the skin glands.

Its subcellular location is the secreted. Functionally, has antimicrobial activity. In Pithecopus hypochondrialis (Orange-legged leaf frog), this protein is Dermaseptin-H5.